A 127-amino-acid polypeptide reads, in one-letter code: Protein chibby homolog 1 (127 aa).

The interval 1 to 25 (MPLFGSIFSPKKTPPRKSASLSNLH) is disordered. Residues S9 and S20 each carry the phosphoserine modification. The interval 60-112 (VADSVISGGVDRRETQRLRKRNQQLEEENNLLRLKVDILLDMLSETTAESHLK) is minimal region for the interaction with PKD2. A coiled-coil region spans residues 68 to 110 (GVDRRETQRLRKRNQQLEEENNLLRLKVDILLDMLSETTAESH). Residues 77–98 (LRKRNQQLEEENNLLRLKVDIL) form a leucine-zipper; mediates homodimerization region.

The protein belongs to the chibby family. In terms of assembly, homodimer. Homodimerization is essential for nuclear localization and interaction with KPNA4 but is dispensable for interaction with CTNNB1. Interacts with polycystin-2/PKD2 and GM130. Interacts with the C-terminal region of CTNNB1. Interacts (C-terminus) with TCIM (C-terminus), TCIM competes with CTNNB1 for the interaction with CBY1. Interacts with FAM92A; this interaction facilitates targeting of FAM92A to cilium basal body. Interacts with CIBAR2. Interacts with KPNA4. As to expression, found in heart, brain, lung, liver, muscle, kidney and testis. Levels are approximately 3-fold higher in embryonic and adult heart than in lung or liver.

The protein resides in the nucleus speckle. It localises to the cytoplasm. Its subcellular location is the cytoskeleton. It is found in the cilium basal body. The protein localises to the microtubule organizing center. The protein resides in the centrosome. It localises to the centriole. Its subcellular location is the golgi apparatus. It is found in the trans-Golgi network. The protein localises to the cell projection. The protein resides in the cilium. It localises to the flagellum. Its subcellular location is the nucleus. In terms of biological role, inhibits the Wnt/Wingless pathway by binding to CTNNB1/beta-catenin and inhibiting beta-catenin-mediated transcriptional activation through competition with TCF/LEF transcription factors. Has also been shown to play a role in regulating the intracellular trafficking of polycystin-2/PKD2 and possibly of other intracellular proteins. Promotes adipocyte and cardiomyocyte differentiation. This is Protein chibby homolog 1 (Cby1) from Mus musculus (Mouse).